Reading from the N-terminus, the 240-residue chain is Protein YIPF6 (240 aa).

The Cytoplasmic portion of the chain corresponds to 1–91; it reads MVVSHLNRTV…PKKSSALLRD (91 aa). The helical transmembrane segment at 92–112 threads the bilayer; the sequence is WDLWGPLLLCVTLALMLQGGS. The Lumenal portion of the chain corresponds to 113-125; that stretch reads ADSEEDGRPQFAE. The helical transmembrane segment at 126 to 146 threads the bilayer; it reads VFVIIWFGSVIITLNSKLLGG. Topologically, residues 147–149 are cytoplasmic; that stretch reads TIS. A helical transmembrane segment spans residues 150–170; sequence FFQSLCVLGYCILPLTVAMIV. Residues 171–172 lie on the Lumenal side of the membrane; it reads CR. The helical transmembrane segment at 173–193 threads the bilayer; sequence IVLLGGSGVVSFAVRLIVVTA. Residues 194–215 are Cytoplasmic-facing; sequence SFSWSTFASTAFLADSQPTNRK. The chain crosses the membrane as a helical span at residues 216–236; it reads ALVVYPVFLFYFVIGWMILTF. Residues 237-240 are Lumenal-facing; sequence SPSH.

Belongs to the YIP1 family.

Its subcellular location is the golgi apparatus membrane. The protein is Protein YIPF6 (yipf6) of Danio rerio (Zebrafish).